A 400-amino-acid polypeptide reads, in one-letter code: Na(+)/H(+) antiporter NhaA (400 aa).

11 consecutive transmembrane segments (helical) span residues 10 to 30 (FNLE…AMII), 60 to 80 (AHHW…GLEL), 95 to 115 (IILP…VYLF), 126 to 146 (GWAI…SLLG), 155 to 175 (VFLV…IALF), 178 to 198 (NDLS…LYLL), 218 to 238 (VAVL…ALFI), 265 to 285 (GILP…AGFG), 295 to 315 (IAAG…WLIF), 334 to 354 (AALL…LAFA), and 364 to 384 (LGII…LKAT).

It belongs to the NhaA Na(+)/H(+) (TC 2.A.33) antiporter family.

The protein resides in the cell inner membrane. It carries out the reaction Na(+)(in) + 2 H(+)(out) = Na(+)(out) + 2 H(+)(in). Na(+)/H(+) antiporter that extrudes sodium in exchange for external protons. The sequence is that of Na(+)/H(+) antiporter NhaA from Psychrobacter cryohalolentis (strain ATCC BAA-1226 / DSM 17306 / VKM B-2378 / K5).